The primary structure comprises 361 residues: Porphobilinogen deaminase (361 aa).

Serine 2 carries the post-translational modification N-acetylserine. Serine 69 is subject to Phosphoserine. An N6-acetyllysine modification is found at lysine 74. Serine 147 carries the post-translational modification Phosphoserine. Cysteine 261 is modified (S-(dipyrrolylmethanemethyl)cysteine).

This sequence belongs to the HMBS family. In terms of assembly, monomer. Dipyrromethane serves as cofactor.

It localises to the cytoplasm. The protein localises to the cytosol. The catalysed reaction is 4 porphobilinogen + H2O = hydroxymethylbilane + 4 NH4(+). Its pathway is porphyrin-containing compound metabolism; protoporphyrin-IX biosynthesis; coproporphyrinogen-III from 5-aminolevulinate: step 2/4. Functionally, as part of the heme biosynthetic pathway, catalyzes the sequential polymerization of four molecules of porphobilinogen to form hydroxymethylbilane, also known as preuroporphyrinogen. Catalysis begins with the assembly of the dipyrromethane cofactor by the apoenzyme from two molecules of porphobilinogen or from preuroporphyrinogen. The covalently linked cofactor acts as a primer, around which the tetrapyrrole product is assembled. In the last step of catalysis, the product, preuroporphyrinogen, is released, leaving the cofactor bound to the holodeaminase intact. The protein is Porphobilinogen deaminase (Hmbs) of Mus musculus (Mouse).